The chain runs to 303 residues: Heme A synthase (303 aa).

Residues 1-8 (MFGKKNLK) lie on the Cytoplasmic side of the membrane. A helical membrane pass occupies residues 9 to 29 (WLGVVATLMMTFVQLGGALVT). Over 30-67 (KTGSADGCGSSWPLCHGALIPEFFPIDTIIELSHRAVS) the chain is Extracellular. A disulfide bridge links cysteine 37 with cysteine 44. The active site involves glutamate 60. Residue histidine 63 coordinates heme o. The chain crosses the membrane as a helical span at residues 68-88 (ALSLLMVLWLVITAWKHIGYI). The Cytoplasmic segment spans residues 89–93 (KEIKP). A helical transmembrane segment spans residues 94–114 (LSIISVGFLLLQALIGAAAVI). Over 115–125 (WQQNDYVLALH) the chain is Extracellular. Histidine 125 contacts heme o. Residues 126 to 146 (FGISLISFSSVFLITLIIFSI) form a helical membrane-spanning segment. Residues 147–163 (DQKYEADELYIKKPLRR) are Cytoplasmic-facing. Residues 164-184 (LTWLMAIIIYCGVYTGALVRH) traverse the membrane as a helical segment. Topologically, residues 185–215 (ADASLAYGGWPLPFHDLVPHSEQDWVQLTHR) are extracellular. Histidine 214 provides a ligand contact to heme b. The chain crosses the membrane as a helical span at residues 216-236 (IMAFIVFTIIMITYIHAVKNY). Residues 237–244 (PNNRTVHY) are Cytoplasmic-facing. Residues 245 to 265 (GYTAAFILVILQVITGALSIM) traverse the membrane as a helical segment. At 266–270 (TNVNL) the chain is on the extracellular side. A helical membrane pass occupies residues 271 to 291 (IIALFHALFITYLFGMTTYFI). Residue histidine 276 participates in heme b binding. At 292-303 (MLMLRSVRSDKQ) the chain is on the cytoplasmic side.

Belongs to the COX15/CtaA family. Type 1 subfamily. Interacts with CtaB. The cofactor is heme b.

Its subcellular location is the cell membrane. The catalysed reaction is Fe(II)-heme o + 2 A + H2O = Fe(II)-heme a + 2 AH2. It functions in the pathway porphyrin-containing compound metabolism; heme A biosynthesis; heme A from heme O: step 1/1. Functionally, catalyzes the conversion of heme O to heme A by two successive hydroxylations of the methyl group at C8. The first hydroxylation forms heme I, the second hydroxylation results in an unstable dihydroxymethyl group, which spontaneously dehydrates, resulting in the formyl group of heme A. This is Heme A synthase from Staphylococcus aureus (strain Mu3 / ATCC 700698).